Here is a 182-residue protein sequence, read N- to C-terminus: Large ribosomal subunit protein uL10 (182 aa).

The protein belongs to the universal ribosomal protein uL10 family. Part of the ribosomal stalk of the 50S ribosomal subunit. The N-terminus interacts with L11 and the large rRNA to form the base of the stalk. The C-terminus forms an elongated spine to which L12 dimers bind in a sequential fashion forming a multimeric L10(L12)X complex.

Functionally, forms part of the ribosomal stalk, playing a central role in the interaction of the ribosome with GTP-bound translation factors. The polypeptide is Large ribosomal subunit protein uL10 (Gluconacetobacter diazotrophicus (strain ATCC 49037 / DSM 5601 / CCUG 37298 / CIP 103539 / LMG 7603 / PAl5)).